The chain runs to 444 residues: Cell wall mannoprotein PST1 (444 aa).

The first 19 residues, 1 to 19 (MQLHSLIASTALLITSALA), serve as a signal peptide directing secretion. N-linked (GlcNAc...) asparagine glycosylation is found at asparagine 57, asparagine 76, asparagine 83, asparagine 86, asparagine 196, asparagine 210, asparagine 228, asparagine 235, asparagine 242, asparagine 263, asparagine 268, asparagine 280, asparagine 292, asparagine 305, and asparagine 329. 2 stretches are compositionally biased toward low complexity: residues 359–381 (SVKL…SKSS) and 395–417 (KAAA…KSSK). A disordered region spans residues 359–418 (SVKLSSTSKSQSSQTTAKVSKSSSKAEEKKFTSGDIKAAASASSVSSSSASSSSSKSSKG). Asparagine 419 is lipidated: GPI-anchor amidated asparagine. The propeptide at 420 to 444 (AAIMAPIGQTTPLVGLLTAIIMSIM) is removed in mature form.

The protein belongs to the SPS2 family. Extensively N- and O-mannosylated.

The protein localises to the cell membrane. It localises to the secreted. Its subcellular location is the cell wall. Has a partially redundant function to ECM33 in cell wall integrity. May be involved in a repair mechanism activated in response to cell wall damage. The chain is Cell wall mannoprotein PST1 (PST1) from Saccharomyces cerevisiae (strain YJM789) (Baker's yeast).